Here is a 329-residue protein sequence, read N- to C-terminus: DNA-directed RNA polymerase subunit alpha (329 aa).

The tract at residues 1-235 (MQGSVTEFLK…EQLEAFVDLR (235 aa)) is alpha N-terminal domain (alpha-NTD). Residues 249 to 329 (FDPILLRPVD…NWPPASIADE (81 aa)) are alpha C-terminal domain (alpha-CTD).

This sequence belongs to the RNA polymerase alpha chain family. Homodimer. The RNAP catalytic core consists of 2 alpha, 1 beta, 1 beta' and 1 omega subunit. When a sigma factor is associated with the core the holoenzyme is formed, which can initiate transcription.

The enzyme catalyses RNA(n) + a ribonucleoside 5'-triphosphate = RNA(n+1) + diphosphate. Functionally, DNA-dependent RNA polymerase catalyzes the transcription of DNA into RNA using the four ribonucleoside triphosphates as substrates. This chain is DNA-directed RNA polymerase subunit alpha, found in Enterobacter sp. (strain 638).